The sequence spans 213 residues: Putative transmembrane protein DDB_G0267860 (213 aa).

The signal sequence occupies residues 1–22 (MKTKILLLNFIIIFFLINVNLA). Over 23–191 (IKKDSPFKEI…SSKFDSSTSS (169 aa)) the chain is Extracellular. N-linked (GlcNAc...) asparagine glycosylation is found at N92 and N114. A helical transmembrane segment spans residues 192-212 (ISINTLAILSLLFLIFINKLI). A topological domain (cytoplasmic) is located at residue N213.

The protein resides in the membrane. This Dictyostelium discoideum (Social amoeba) protein is Putative transmembrane protein DDB_G0267860.